The chain runs to 183 residues: Streptavidin-V2 (183 aa).

The N-terminal stretch at 1–24 (MRKIVVAAIAVSLTTVGITASASA) is a signal peptide. The Avidin-like domain occupies 37-159 (AEAGITGTWY…GHDTFTKVKP (123 aa)). Residues Tyr67 and Tyr78 each contribute to the biotin site. Positions 83 to 85 (RYD) match the Cell attachment site; atypical motif. 3 residues coordinate biotin: Trp116, Trp132, and Trp144.

This sequence belongs to the avidin/streptavidin family. As to quaternary structure, homotetramer.

The protein resides in the secreted. In terms of biological role, the biological function of streptavidin is not known. Forms a strong non-covalent specific complex with biotin (one molecule of biotin per subunit of streptavidin). This Streptomyces violaceus (Streptomyces venezuelae) protein is Streptavidin-V2.